Here is a 510-residue protein sequence, read N- to C-terminus: NAD(P)H-quinone oxidoreductase subunit 2 B, chloroplastic (510 aa).

Helical transmembrane passes span 24 to 44 (LLLF…GLIL), 57 to 77 (IPWL…ALLF), 99 to 119 (IFQF…VEYI), 124 to 144 (MAIT…MFLC), 150 to 170 (ITIF…SGYT), 183 to 203 (YLLM…WLYG), 227 to 247 (PGIS…LSPA), 295 to 315 (WHLL…LIAI), 323 to 343 (MLAY…IVGD), 347 to 367 (GYAS…GTFA), 395 to 415 (ALSS…AGFF), 418 to 438 (LHLF…IGLL), and 484 to 504 (MIVC…IIAI).

It belongs to the complex I subunit 2 family. In terms of assembly, NDH is composed of at least 16 different subunits, 5 of which are encoded in the nucleus.

The protein localises to the plastid. The protein resides in the chloroplast thylakoid membrane. It catalyses the reaction a plastoquinone + NADH + (n+1) H(+)(in) = a plastoquinol + NAD(+) + n H(+)(out). The catalysed reaction is a plastoquinone + NADPH + (n+1) H(+)(in) = a plastoquinol + NADP(+) + n H(+)(out). Its function is as follows. NDH shuttles electrons from NAD(P)H:plastoquinone, via FMN and iron-sulfur (Fe-S) centers, to quinones in the photosynthetic chain and possibly in a chloroplast respiratory chain. The immediate electron acceptor for the enzyme in this species is believed to be plastoquinone. Couples the redox reaction to proton translocation, and thus conserves the redox energy in a proton gradient. The protein is NAD(P)H-quinone oxidoreductase subunit 2 B, chloroplastic of Chloranthus spicatus (Chulantree).